The sequence spans 92 residues: Small ribosomal subunit protein bS20 (92 aa).

Disordered stretches follow at residues Met1–Lys25 and His68–Ala92. Low complexity predominate over residues Ala80 to Ala92.

This sequence belongs to the bacterial ribosomal protein bS20 family.

Binds directly to 16S ribosomal RNA. In Deinococcus radiodurans (strain ATCC 13939 / DSM 20539 / JCM 16871 / CCUG 27074 / LMG 4051 / NBRC 15346 / NCIMB 9279 / VKM B-1422 / R1), this protein is Small ribosomal subunit protein bS20.